The sequence spans 941 residues: Isoleucine--tRNA ligase (941 aa).

A 'HIGH' region motif is present at residues 59 to 69; that stretch reads PYANGNIHIGH. An L-isoleucyl-5'-AMP-binding site is contributed by Glu-562. The 'KMSKS' region motif lies at 603 to 607; the sequence is KMSKS. An ATP-binding site is contributed by Lys-606. Positions 904, 907, 924, and 927 each coordinate Zn(2+).

It belongs to the class-I aminoacyl-tRNA synthetase family. IleS type 1 subfamily. In terms of assembly, monomer. Zn(2+) is required as a cofactor.

Its subcellular location is the cytoplasm. The enzyme catalyses tRNA(Ile) + L-isoleucine + ATP = L-isoleucyl-tRNA(Ile) + AMP + diphosphate. In terms of biological role, catalyzes the attachment of isoleucine to tRNA(Ile). As IleRS can inadvertently accommodate and process structurally similar amino acids such as valine, to avoid such errors it has two additional distinct tRNA(Ile)-dependent editing activities. One activity is designated as 'pretransfer' editing and involves the hydrolysis of activated Val-AMP. The other activity is designated 'posttransfer' editing and involves deacylation of mischarged Val-tRNA(Ile). The sequence is that of Isoleucine--tRNA ligase from Haemophilus influenzae (strain PittEE).